The primary structure comprises 146 residues: Deoxyuridine 5'-triphosphate nucleotidohydrolase (146 aa).

Residues 60–62 (RSG), N73, and 77–79 (VID) contribute to the substrate site.

This sequence belongs to the dUTPase family. It depends on Mg(2+) as a cofactor.

It carries out the reaction dUTP + H2O = dUMP + diphosphate + H(+). It functions in the pathway pyrimidine metabolism; dUMP biosynthesis; dUMP from dCTP (dUTP route): step 2/2. In terms of biological role, this enzyme is involved in nucleotide metabolism: it produces dUMP, the immediate precursor of thymidine nucleotides and it decreases the intracellular concentration of dUTP so that uracil cannot be incorporated into DNA. The protein is Deoxyuridine 5'-triphosphate nucleotidohydrolase of Tropheryma whipplei (strain TW08/27) (Whipple's bacillus).